Here is a 48-residue protein sequence, read N- to C-terminus: Large ribosomal subunit protein bL33 (48 aa).

It belongs to the bacterial ribosomal protein bL33 family.

This is Large ribosomal subunit protein bL33 from Streptococcus mutans serotype c (strain ATCC 700610 / UA159).